Here is a 365-residue protein sequence, read N- to C-terminus: Putative glutamate--cysteine ligase 2-2 (365 aa).

Belongs to the glutamate--cysteine ligase type 2 family. YbdK subfamily.

It catalyses the reaction L-cysteine + L-glutamate + ATP = gamma-L-glutamyl-L-cysteine + ADP + phosphate + H(+). Its function is as follows. ATP-dependent carboxylate-amine ligase which exhibits weak glutamate--cysteine ligase activity. The sequence is that of Putative glutamate--cysteine ligase 2-2 from Mycolicibacterium vanbaalenii (strain DSM 7251 / JCM 13017 / BCRC 16820 / KCTC 9966 / NRRL B-24157 / PYR-1) (Mycobacterium vanbaalenii).